The primary structure comprises 80 residues: Ubiquinol-cytochrome c reductase complex assembly factor 5 (80 aa).

At 1–19 the chain is on the mitochondrial matrix side; the sequence is MFSRAQVRRALQRVPGKQR. A helical membrane pass occupies residues 20-41; that stretch reads FGIYRFLPFFFVLGGAMEWIMI. Topologically, residues 42-80 are mitochondrial intermembrane; it reads KVRVGQETFYDVYRRKASERQYQRRLEDTSETNLHKLIK.

The protein belongs to the UQCC5 family. In terms of assembly, associates with the mitochondrial ribosome. Interacts with UQCC6. Interacts with MT-CYB; interacts with newly synthesizes MT-CYB. Forms a complex, named COMB/coordinator of mitochondrial CYTB biogenesis, composed of UQCC1, UQCC2, UQCC4, UQCC5 and UQCC6; stabilizes nascent cytochrome b/MT-CYB and promotes its membrane insertion.

The protein resides in the mitochondrion inner membrane. Its function is as follows. Required for the assembly and stability of the mitochondrial ubiquinol-cytochrome c reductase complex (complex III (CIII) or cytochrome b-c1 complex), a multisubunit transmembrane complex that is part of the mitochondrial electron transport chain (ETC) which drives oxidative phosphorylation. Mediates early complex III biogenesis. Participates in regulating the levels of electron transport chain proteins, and therefore energy supply, in response to changes in energy demand. Also required for cytochrome c oxidase complex (complex IV) assembly. In Mus musculus (Mouse), this protein is Ubiquinol-cytochrome c reductase complex assembly factor 5.